A 596-amino-acid polypeptide reads, in one-letter code: Putative terpenoid synthase 5 (596 aa).

Residues Asp349, Asp353, Asn481, and Asp489 each coordinate Mg(2+). The short motif at 349-353 (DDTCD) is the DDXXD motif element.

Belongs to the terpene synthase family. Tpsa subfamily. Mg(2+) serves as cofactor. It depends on Mn(2+) as a cofactor.

Its subcellular location is the cytoplasm. Its pathway is secondary metabolite biosynthesis; terpenoid biosynthesis. This chain is Putative terpenoid synthase 5 (TPS05), found in Arabidopsis thaliana (Mouse-ear cress).